The sequence spans 279 residues: Pantothenate synthetase (279 aa).

26 to 33 is a binding site for ATP; sequence MGNLHEGH. H33 functions as the Proton donor in the catalytic mechanism. Q57 contacts (R)-pantoate. Beta-alanine is bound at residue Q57. 144–147 serves as a coordination point for ATP; sequence GKKD. Q150 serves as a coordination point for (R)-pantoate. ATP-binding positions include V173 and 181-184; that span reads LSSR.

This sequence belongs to the pantothenate synthetase family. In terms of assembly, homodimer.

The protein resides in the cytoplasm. The enzyme catalyses (R)-pantoate + beta-alanine + ATP = (R)-pantothenate + AMP + diphosphate + H(+). The protein operates within cofactor biosynthesis; (R)-pantothenate biosynthesis; (R)-pantothenate from (R)-pantoate and beta-alanine: step 1/1. In terms of biological role, catalyzes the condensation of pantoate with beta-alanine in an ATP-dependent reaction via a pantoyl-adenylate intermediate. The sequence is that of Pantothenate synthetase from Burkholderia lata (strain ATCC 17760 / DSM 23089 / LMG 22485 / NCIMB 9086 / R18194 / 383).